A 332-amino-acid polypeptide reads, in one-letter code: UDP-N-acetylenolpyruvoylglucosamine reductase (332 aa).

The 199-residue stretch at Arg-45–Leu-243 folds into the FAD-binding PCMH-type domain. Residue Arg-194 is part of the active site. The active-site Proton donor is the Ser-250. Glu-320 is a catalytic residue.

Belongs to the MurB family. Requires FAD as cofactor.

Its subcellular location is the cytoplasm. It carries out the reaction UDP-N-acetyl-alpha-D-muramate + NADP(+) = UDP-N-acetyl-3-O-(1-carboxyvinyl)-alpha-D-glucosamine + NADPH + H(+). It functions in the pathway cell wall biogenesis; peptidoglycan biosynthesis. Its function is as follows. Cell wall formation. This Nitrosomonas eutropha (strain DSM 101675 / C91 / Nm57) protein is UDP-N-acetylenolpyruvoylglucosamine reductase.